The sequence spans 448 residues: Death-associated protein kinase 3 (448 aa).

The Protein kinase domain maps to 13–275 (YEMGEELGSG…IAQSLEHSWI (263 aa)). ATP-binding positions include 19 to 27 (LGSGQFAIV) and lysine 42. Aspartate 139 acts as the Proton acceptor in catalysis. Residues 161 to 204 (DFGIAHRIEAGSEFKNIFGTPEFVAPEIVNYEPLGLEADMWSIG) form an activation segment region. Residues threonine 180 and threonine 225 each carry the phosphothreonine modification. At threonine 265 the chain carries Phosphothreonine; by autocatalysis. Threonine 265 is subject to Phosphothreonine; by ROCK1. Serine 304 is modified (phosphoserine; by DAPK1). The residue at position 306 (serine 306) is a Phosphoserine; by autocatalysis and DAPK1. Phosphoserine; by DAPK1 is present on residues serine 307, serine 313, and serine 321. The interaction with CDC5L stretch occupies residues 390–448 (AQEEARAALLGAGGLKRRLCRLENRYDALAAQVAAEVQFVRDLVRALEQERLQAECGVR). The interval 418–448 (LAAQVAAEVQFVRDLVRALEQERLQAECGVR) is required for interaction with ATF4 but not with PAWR. The segment at 422-436 (VAAEVQFVRDLVRAL) is leucine-zipper.

This sequence belongs to the protein kinase superfamily. CAMK Ser/Thr protein kinase family. DAP kinase subfamily. As to quaternary structure, homooligomer in its kinase-active form (homotrimers and homodimers are reported); monomeric in its kinase-inactive form. Homodimerization is required for activation segment autophosphorylation. Interacts with DAXX, ATF4, NLK, TCF7L2, UBE2D1, UBE2D2, UBE2D3 and CDC5L. Interacts with PAWR; also demonstrated in aorta smooth muscle cells indicative for the cytoskeletal targeting function of PAWR. Interacts with AR; enhanced by AATF. Interacts with LUZP1; the interaction is likely to occur throughout the cell cycle and reduces the LUZP1-mediated suppression of MYL9 phosphorylation. Requires Mg(2+) as cofactor. In terms of processing, ubiquitinated. Ubiquitination mediated by the UBE2D3 E3 ligase does not lead to proteasomal degradation, but influences promyelocytic leukemia protein nuclear bodies (PML-NBs) formation in the nucleus. Post-translationally, the phosphorylation status is critical for kinase activity, oligomerization and intracellular localization. Phosphorylation at Thr-180, Thr-225 and Thr-265 is essential for activity. The phosphorylated form is localized in the cytoplasm and nuclear translocation or retention is maximal when it is not phosphorylated. Phosphorylation increases the trimeric form, and its dephosphorylation favors a kinase-inactive monomeric form. Ubiquitously expressed in all tissue types examined. High levels in brain, heart, lung and spleen, lower expression in kidney, liver, skeletal muscle and testis. Isoform 2 is expressed in the smooth muscle.

The protein localises to the nucleus. The protein resides in the PML body. It localises to the cytoplasm. Its subcellular location is the cytoskeleton. It is found in the microtubule organizing center. The protein localises to the chromosome. The protein resides in the centromere. It localises to the spindle. Its subcellular location is the midbody. It catalyses the reaction L-seryl-[protein] + ATP = O-phospho-L-seryl-[protein] + ADP + H(+). The catalysed reaction is L-threonyl-[protein] + ATP = O-phospho-L-threonyl-[protein] + ADP + H(+). A sequential activation is proposed: autophosphorylation at consensus sites is leading to dimerization of the catalytic domain and activation segment exchange (producing an active confirmation of both kinase modules in trans) followed by phosphorylation at Thr-180 in the activation segment and at other regulatory sites. Phosphorylation at Thr-180, Thr-225 and Thr-265 is essential for activity. Inhibited by pyridone 6 (K00225), a potent, ATP-competitive inhibitor. Phosphorylation at Thr-180, Thr-225 and Thr-265 is essential for activity. In terms of biological role, serine/threonine kinase which is involved in the regulation of apoptosis, autophagy, transcription, translation and actin cytoskeleton reorganization. Regulates both type I (caspase-dependent) apoptotic and type II (caspase-independent) autophagic cell deaths signal, depending on the cellular setting. Involved in formation of promyelocytic leukemia protein nuclear body (PML-NB). Involved in apoptosis involving PAWR which mediates cytoplasmic relocation; in vitro phosphorylates PAWR. Regulates myosin phosphorylation in both smooth muscle and non-muscle cells. In smooth muscle, regulates myosin either directly by phosphorylating MYL12B and MYL9 or through inhibition of smooth muscle myosin phosphatase (SMPP1M) via phosphorylation of PPP1R12A; the inhibition of SMPP1M functions to enhance muscle responsiveness to Ca(2+) and promote a contractile state. Phosphorylates MYL12B in non-muscle cells leading to reorganization of actin cytoskeleton such as in regulation of cell polarity and cell migration. Positively regulates canonical Wnt/beta-catenin signaling through interaction with NLK and TCF7L2; disrupts the NLK-TCF7L2 complex thereby influencing the phosphorylation of TCF7L2 by NLK. Phosphorylates RPL13A on 'Ser-77' upon interferon-gamma activation which is causing RPL13A release from the ribosome, RPL13A association with the GAIT complex and its subsequent involvement in transcript-selective translation inhibition. Phosphorylates STAT3 and enhances its transcriptional activity. Enhances transcription from AR-responsive promoters in a hormone- and kinase-dependent manner. Phosphorylates histone H3 on 'Thr-11' at centromeres during mitosis. In Rattus norvegicus (Rat), this protein is Death-associated protein kinase 3 (Dapk3).